A 284-amino-acid chain; its full sequence is 4-hydroxybenzoate octaprenyltransferase (284 aa).

Helical transmembrane passes span 33 to 53 (VIAA…LGVF), 93 to 113 (IGLF…MNPL), 136 to 156 (HIPQ…AWAA), 159 to 179 (GELP…TIAY), 209 to 229 (LIIG…GQFY), 235 to 252 (YYWT…QQHL), and 264 to 284 (AFLN…VAFW).

This sequence belongs to the UbiA prenyltransferase family. Requires Mg(2+) as cofactor.

Its subcellular location is the cell inner membrane. The enzyme catalyses all-trans-octaprenyl diphosphate + 4-hydroxybenzoate = 4-hydroxy-3-(all-trans-octaprenyl)benzoate + diphosphate. Its pathway is cofactor biosynthesis; ubiquinone biosynthesis. Its function is as follows. Catalyzes the prenylation of para-hydroxybenzoate (PHB) with an all-trans polyprenyl group. Mediates the second step in the final reaction sequence of ubiquinone-8 (UQ-8) biosynthesis, which is the condensation of the polyisoprenoid side chain with PHB, generating the first membrane-bound Q intermediate 3-octaprenyl-4-hydroxybenzoate. The chain is 4-hydroxybenzoate octaprenyltransferase from Vibrio parahaemolyticus serotype O3:K6 (strain RIMD 2210633).